The sequence spans 461 residues: Putative dipeptidase CPSG_01350 (461 aa).

Residues 1 to 10 are compositionally biased toward basic and acidic residues; sequence MSARDNEKGS. Residues 1–31 form a disordered region; sequence MSARDNEKGSARSQPSHAAASEIENVPRPSR. A helical membrane pass occupies residues 35–52; that stretch reads WTGTMIKVFIICACAGIV. The Zn(2+) site is built by His-90, Asp-92, and Glu-203. Cys-142 and Cys-232 are oxidised to a cystine. Substrate is bound at residue His-230. Residues His-274 and His-295 each coordinate Zn(2+). Substrate-binding residues include Arg-306 and Asp-366. Asn-379 carries N-linked (GlcNAc...) asparagine glycosylation.

This sequence belongs to the metallo-dependent hydrolases superfamily. Peptidase M19 family. Requires Zn(2+) as cofactor.

It is found in the membrane. The enzyme catalyses an L-aminoacyl-L-amino acid + H2O = 2 an L-alpha-amino acid. In terms of biological role, hydrolyzes a wide range of dipeptides. This Coccidioides posadasii (strain RMSCC 757 / Silveira) (Valley fever fungus) protein is Putative dipeptidase CPSG_01350.